Consider the following 228-residue polypeptide: 3-oxoadipate CoA-transferase subunit A (228 aa).

A CoA-binding site is contributed by 25–31 (GGFGTAG).

It belongs to the 3-oxoacid CoA-transferase subunit A family. In terms of assembly, heterodimer.

The enzyme catalyses 3-oxoadipate + succinyl-CoA = 3-oxoadipyl-CoA + succinate. Its pathway is aromatic compound metabolism; beta-ketoadipate pathway; acetyl-CoA and succinyl-CoA from 3-oxoadipate: step 1/2. The sequence is that of 3-oxoadipate CoA-transferase subunit A (pcaI) from Acinetobacter baylyi (strain ATCC 33305 / BD413 / ADP1).